The sequence spans 417 residues: Delta-aminolevulinic acid dehydratase, chloroplastic (417 aa).

A chloroplast-targeting transit peptide spans 1 to 40 (MAALLVPGGGAAPGLVWRRRRAAVQCAAASPSSPDPSWRT). The interval 63-92 (VVSGNPPAAPAAPAKAKAPPGTPVVKPLRL) is disordered. Lys-286 functions as the Schiff-base intermediate with substrate in the catalytic mechanism. Positions 296 and 308 each coordinate 5-aminolevulinate. Position 324 (Glu-324) interacts with Mg(2+). Lys-339 (schiff-base intermediate with substrate) is an active-site residue. The 5-aminolevulinate site is built by Ser-365 and Tyr-404.

The protein belongs to the ALAD family. In terms of assembly, homooctamer. Requires Mg(2+) as cofactor.

It localises to the plastid. The protein localises to the chloroplast. It catalyses the reaction 2 5-aminolevulinate = porphobilinogen + 2 H2O + H(+). Its pathway is porphyrin-containing compound metabolism; protoporphyrin-IX biosynthesis; coproporphyrinogen-III from 5-aminolevulinate: step 1/4. Functionally, catalyzes an early step in the biosynthesis of tetrapyrroles. Binds two molecules of 5-aminolevulinate per subunit, each at a distinct site, and catalyzes their condensation to form porphobilinogen. This Selaginella martensii (Martens's spike moss) protein is Delta-aminolevulinic acid dehydratase, chloroplastic (HEMB).